The following is a 269-amino-acid chain: Small ribosomal subunit protein uS3m (269 aa).

This sequence belongs to the universal ribosomal protein uS3 family.

It localises to the mitochondrion. Functionally, essential for mitochondrial protein synthesis and required for the maturation of small ribosomal subunits. The sequence is that of Small ribosomal subunit protein uS3m (VAR1) from Monosporozyma servazzii (Yeast).